Consider the following 461-residue polypeptide: Glycogen synthase (461 aa).

ADP-alpha-D-glucose is bound at residue Lys-15.

This sequence belongs to the glycosyltransferase 1 family. Bacterial/plant glycogen synthase subfamily.

The enzyme catalyses [(1-&gt;4)-alpha-D-glucosyl](n) + ADP-alpha-D-glucose = [(1-&gt;4)-alpha-D-glucosyl](n+1) + ADP + H(+). Its pathway is glycan biosynthesis; glycogen biosynthesis. Its function is as follows. Synthesizes alpha-1,4-glucan chains using ADP-glucose. The chain is Glycogen synthase from Fusobacterium nucleatum subsp. nucleatum (strain ATCC 25586 / DSM 15643 / BCRC 10681 / CIP 101130 / JCM 8532 / KCTC 2640 / LMG 13131 / VPI 4355).